A 217-amino-acid chain; its full sequence is Ras-related protein RABA5b (217 aa).

19–26 serves as a coordination point for GTP; the sequence is GDSAVGKS. Positions 41–49 match the Effector region motif; sequence SKATIGVEF. Residues 67–71, 125–128, and 155–156 contribute to the GTP site; these read DTAGQ, NKCD, and SA. Residues Cys214 and Cys215 are each lipidated (S-geranylgeranyl cysteine).

The protein belongs to the small GTPase superfamily. Rab family.

Its subcellular location is the cell membrane. Its function is as follows. Intracellular vesicle trafficking and protein transport. The protein is Ras-related protein RABA5b (RABA5B) of Arabidopsis thaliana (Mouse-ear cress).